Here is a 438-residue protein sequence, read N- to C-terminus: Methylenetetrahydrofolate--tRNA-(uracil-5-)-methyltransferase TrmFO (438 aa).

7–12 (GAGLAG) contributes to the FAD binding site.

It belongs to the MnmG family. TrmFO subfamily. Requires FAD as cofactor.

The protein resides in the cytoplasm. The enzyme catalyses uridine(54) in tRNA + (6R)-5,10-methylene-5,6,7,8-tetrahydrofolate + NADH + H(+) = 5-methyluridine(54) in tRNA + (6S)-5,6,7,8-tetrahydrofolate + NAD(+). It catalyses the reaction uridine(54) in tRNA + (6R)-5,10-methylene-5,6,7,8-tetrahydrofolate + NADPH + H(+) = 5-methyluridine(54) in tRNA + (6S)-5,6,7,8-tetrahydrofolate + NADP(+). Functionally, catalyzes the folate-dependent formation of 5-methyl-uridine at position 54 (M-5-U54) in all tRNAs. In Sulfurihydrogenibium sp. (strain YO3AOP1), this protein is Methylenetetrahydrofolate--tRNA-(uracil-5-)-methyltransferase TrmFO.